We begin with the raw amino-acid sequence, 407 residues long: Phosphopentomutase (407 aa).

Positions 10, 306, 311, 347, 348, and 359 each coordinate Mn(2+).

The protein belongs to the phosphopentomutase family. The cofactor is Mn(2+).

Its subcellular location is the cytoplasm. It carries out the reaction 2-deoxy-alpha-D-ribose 1-phosphate = 2-deoxy-D-ribose 5-phosphate. The enzyme catalyses alpha-D-ribose 1-phosphate = D-ribose 5-phosphate. It participates in carbohydrate degradation; 2-deoxy-D-ribose 1-phosphate degradation; D-glyceraldehyde 3-phosphate and acetaldehyde from 2-deoxy-alpha-D-ribose 1-phosphate: step 1/2. Functionally, isomerase that catalyzes the conversion of deoxy-ribose 1-phosphate (dRib-1-P) and ribose 1-phosphate (Rib-1-P) to deoxy-ribose 5-phosphate (dRib-5-P) and ribose 5-phosphate (Rib-5-P), respectively. In Salmonella paratyphi A (strain AKU_12601), this protein is Phosphopentomutase.